An 878-amino-acid polypeptide reads, in one-letter code: Phosphoenolpyruvate carboxylase (878 aa).

Residues H137 and K545 contribute to the active site.

This sequence belongs to the PEPCase type 1 family. Mg(2+) serves as cofactor.

The enzyme catalyses oxaloacetate + phosphate = phosphoenolpyruvate + hydrogencarbonate. Forms oxaloacetate, a four-carbon dicarboxylic acid source for the tricarboxylic acid cycle. The protein is Phosphoenolpyruvate carboxylase of Yersinia pseudotuberculosis serotype O:1b (strain IP 31758).